The primary structure comprises 450 residues: Glutamyl-tRNA reductase (450 aa).

Substrate contacts are provided by residues 45 to 48 (TCNR), Ser-107, 112 to 114 (ERE), and Gln-118. Residue Cys-46 is the Nucleophile of the active site. 196 to 201 (GTGAYA) is an NADP(+) binding site.

Belongs to the glutamyl-tRNA reductase family. As to quaternary structure, homodimer.

It carries out the reaction (S)-4-amino-5-oxopentanoate + tRNA(Glu) + NADP(+) = L-glutamyl-tRNA(Glu) + NADPH + H(+). Its pathway is porphyrin-containing compound metabolism; protoporphyrin-IX biosynthesis; 5-aminolevulinate from L-glutamyl-tRNA(Glu): step 1/2. Functionally, catalyzes the NADPH-dependent reduction of glutamyl-tRNA(Glu) to glutamate 1-semialdehyde (GSA). This chain is Glutamyl-tRNA reductase, found in Micrococcus luteus (strain ATCC 4698 / DSM 20030 / JCM 1464 / CCM 169 / CCUG 5858 / IAM 1056 / NBRC 3333 / NCIMB 9278 / NCTC 2665 / VKM Ac-2230) (Micrococcus lysodeikticus).